Reading from the N-terminus, the 155-residue chain is 6,7-dimethyl-8-ribityllumazine synthase (155 aa).

5-amino-6-(D-ribitylamino)uracil is bound by residues F23, A57 to E59, and A81 to I83. A86 to T87 lines the (2S)-2-hydroxy-3-oxobutyl phosphate pocket. H89 (proton donor) is an active-site residue. Residue F114 coordinates 5-amino-6-(D-ribitylamino)uracil. R128 contacts (2S)-2-hydroxy-3-oxobutyl phosphate.

This sequence belongs to the DMRL synthase family.

The enzyme catalyses (2S)-2-hydroxy-3-oxobutyl phosphate + 5-amino-6-(D-ribitylamino)uracil = 6,7-dimethyl-8-(1-D-ribityl)lumazine + phosphate + 2 H2O + H(+). It participates in cofactor biosynthesis; riboflavin biosynthesis; riboflavin from 2-hydroxy-3-oxobutyl phosphate and 5-amino-6-(D-ribitylamino)uracil: step 1/2. In terms of biological role, catalyzes the formation of 6,7-dimethyl-8-ribityllumazine by condensation of 5-amino-6-(D-ribitylamino)uracil with 3,4-dihydroxy-2-butanone 4-phosphate. This is the penultimate step in the biosynthesis of riboflavin. This Geotalea daltonii (strain DSM 22248 / JCM 15807 / FRC-32) (Geobacter daltonii) protein is 6,7-dimethyl-8-ribityllumazine synthase.